The following is a 501-amino-acid chain: UPF0616 protein C1687.04 (501 aa).

It belongs to the UPF0616 family.

The protein localises to the cytoplasm. Its subcellular location is the nucleus. The chain is UPF0616 protein C1687.04 from Schizosaccharomyces pombe (strain 972 / ATCC 24843) (Fission yeast).